Here is a 128-residue protein sequence, read N- to C-terminus: Glycine cleavage system H protein (128 aa).

The 83-residue stretch at 22 to 104 (VATVGITEHA…YGEGWIFKMK (83 aa)) folds into the Lipoyl-binding domain. At Lys63 the chain carries N6-lipoyllysine.

This sequence belongs to the GcvH family. The glycine cleavage system is composed of four proteins: P, T, L and H. It depends on (R)-lipoate as a cofactor.

The glycine cleavage system catalyzes the degradation of glycine. The H protein shuttles the methylamine group of glycine from the P protein to the T protein. The protein is Glycine cleavage system H protein of Methylacidiphilum infernorum (isolate V4) (Methylokorus infernorum (strain V4)).